Reading from the N-terminus, the 643-residue chain is 1-deoxy-D-xylulose-5-phosphate synthase (643 aa).

Residues histidine 78 and 119–121 (AHS) each bind thiamine diphosphate. Aspartate 150 is a Mg(2+) binding site. Thiamine diphosphate is bound by residues 151-152 (GA), asparagine 179, tyrosine 288, and glutamate 370. Asparagine 179 is a binding site for Mg(2+).

It belongs to the transketolase family. DXPS subfamily. Homodimer. It depends on Mg(2+) as a cofactor. Requires thiamine diphosphate as cofactor.

The enzyme catalyses D-glyceraldehyde 3-phosphate + pyruvate + H(+) = 1-deoxy-D-xylulose 5-phosphate + CO2. It functions in the pathway metabolic intermediate biosynthesis; 1-deoxy-D-xylulose 5-phosphate biosynthesis; 1-deoxy-D-xylulose 5-phosphate from D-glyceraldehyde 3-phosphate and pyruvate: step 1/1. Functionally, catalyzes the acyloin condensation reaction between C atoms 2 and 3 of pyruvate and glyceraldehyde 3-phosphate to yield 1-deoxy-D-xylulose-5-phosphate (DXP). This chain is 1-deoxy-D-xylulose-5-phosphate synthase, found in Xanthobacter autotrophicus (strain ATCC BAA-1158 / Py2).